A 109-amino-acid chain; its full sequence is Ubiquitin-related modifier 1 homolog (109 aa).

At Gly109 the chain carries 1-thioglycine. Gly109 is covalently cross-linked (Glycyl lysine isopeptide (Gly-Lys) (interchain with K-? in acceptor proteins)).

It belongs to the URM1 family. In terms of processing, C-terminal thiocarboxylation occurs in 2 steps, it is first acyl-adenylated (-COAMP) via the hesA/moeB/thiF part of the MOCS3 homolog, then thiocarboxylated (-COSH) via the rhodanese domain of the MOCS3 homolog.

Its subcellular location is the cytoplasm. The protein operates within tRNA modification; 5-methoxycarbonylmethyl-2-thiouridine-tRNA biosynthesis. In terms of biological role, acts as a sulfur carrier required for 2-thiolation of mcm(5)S(2)U at tRNA wobble positions of cytosolic tRNA(Lys), tRNA(Glu) and tRNA(Gln). Serves as sulfur donor in tRNA 2-thiolation reaction by being thiocarboxylated (-COSH) at its C-terminus by MOCS3. The sulfur is then transferred to tRNA to form 2-thiolation of mcm(5)S(2)U. Also acts as a ubiquitin-like protein (UBL) that is covalently conjugated via an isopeptide bond to lysine residues of target proteins. The thiocarboxylated form serves as substrate for conjugation and oxidative stress specifically induces the formation of UBL-protein conjugates. The polypeptide is Ubiquitin-related modifier 1 homolog (Bombyx mori (Silk moth)).